Consider the following 273-residue polypeptide: Soluble P-type ATPase-like phosphatase (273 aa).

Catalysis depends on D8, which acts as the 4-aspartylphosphate intermediate.

The protein belongs to the cation transport ATPase (P-type) (TC 3.A.3) family. Type IB subfamily. Requires Mg(2+) as cofactor.

Its activity is regulated as follows. Inhibited by orthovanadate. Functionally, most probably acts as a phosphatase in the cytosol. The sequence is that of Soluble P-type ATPase-like phosphatase (patS) from Methanocaldococcus jannaschii (strain ATCC 43067 / DSM 2661 / JAL-1 / JCM 10045 / NBRC 100440) (Methanococcus jannaschii).